A 186-amino-acid chain; its full sequence is DNA-directed RNA polymerase 22 kDa subunit (186 aa).

The protein belongs to the poxviridae DNA-directed RNA polymerase 22 kDa subunit family. As to quaternary structure, the DNA-dependent RNA polymerase used for intermediate and late genes expression consists of eight subunits Rpo30/OPG66, Rpo7/OPG90, Rpo22/OPG103, Rpo147/OPG105, Rpo18/OPG119, Rpo19/OPG131, Rpo132/OPG151 and Rpo35/OPG156. The same holoenzyme, with the addition of the transcription-specificity factor OPG109, is used for early gene expression.

Its subcellular location is the virion. It carries out the reaction RNA(n) + a ribonucleoside 5'-triphosphate = RNA(n+1) + diphosphate. Part of the DNA-dependent RNA polymerase which catalyzes the transcription of viral DNA into RNA using the four ribonucleoside triphosphates as substrates. Responsible for the transcription of early, intermediate and late genes. DNA-dependent RNA polymerase associates with the early transcription factor (ETF), itself composed of OPG118 and OPG133, thereby allowing the early genes transcription. Late transcription, and probably also intermediate transcription, require newly synthesized RNA polymerase. The polypeptide is DNA-directed RNA polymerase 22 kDa subunit (OPG103) (Vertebrata (FPV)).